The primary structure comprises 318 residues: V-set and immunoglobulin domain-containing protein 1 (318 aa).

Positions 1 to 19 (MSFLLFITLGLSLTALSHC) are cleaved as a signal peptide. One can recognise an Ig-like V-type domain in the interval 20–131 (VQVTIQNPII…SSGQGKILLT (112 aa)). Over 20–233 (VQVTIQNPII…TGGEGGVIAA (214 aa)) the chain is Extracellular. Disulfide bonds link Cys41-Cys114 and Cys157-Cys207. One can recognise an Ig-like C2-type domain in the interval 136–223 (PSVPHCSIRG…GNATCELNLH (88 aa)). Residues 234-254 (AVIGGLLAAAIIIAIVWFLVV) traverse the membrane as a helical segment. Residues 255–318 (KRKQKKQLPP…ANGETEEPTA (64 aa)) are Cytoplasmic-facing. The segment at 261-318 (QLPPTKEMKTGGNQYMAVSGEANEPPKENLGASEPTETIQFHDHAENAANGETEEPTA) is disordered.

In terms of tissue distribution, expressed in thymocytes.

The protein localises to the membrane. This chain is V-set and immunoglobulin domain-containing protein 1 (vsig1), found in Xenopus laevis (African clawed frog).